An 87-amino-acid polypeptide reads, in one-letter code: MSERNQRKVYTGRVVSDKMDKTITVLVETYKTHSLYGKRVKYSKKYKAHDEQNQAKLGDIVKIMETRPLSATKRFRLVEIVEEAVVI.

Belongs to the universal ribosomal protein uS17 family. In terms of assembly, part of the 30S ribosomal subunit.

Its function is as follows. One of the primary rRNA binding proteins, it binds specifically to the 5'-end of 16S ribosomal RNA. The protein is Small ribosomal subunit protein uS17 of Bacillus mycoides (strain KBAB4) (Bacillus weihenstephanensis).